Reading from the N-terminus, the 321-residue chain is Glutaminase (321 aa).

Substrate-binding residues include Ser69, Asn120, Glu165, Asn172, Tyr196, Tyr248, and Val266.

It belongs to the glutaminase family. In terms of assembly, homotetramer.

The catalysed reaction is L-glutamine + H2O = L-glutamate + NH4(+). In Bacteroides fragilis (strain ATCC 25285 / DSM 2151 / CCUG 4856 / JCM 11019 / LMG 10263 / NCTC 9343 / Onslow / VPI 2553 / EN-2), this protein is Glutaminase.